Consider the following 158-residue polypeptide: Phosphopantetheine adenylyltransferase (158 aa).

Thr-9 is a substrate binding site. ATP is bound by residues 9–10 and His-17; that span reads TF. Lys-41, Leu-73, and Arg-87 together coordinate substrate. ATP is bound by residues 88 to 90, Glu-98, and 123 to 129; these read GVR and WSYVSST.

It belongs to the bacterial CoaD family. Homohexamer. It depends on Mg(2+) as a cofactor.

It is found in the cytoplasm. The catalysed reaction is (R)-4'-phosphopantetheine + ATP + H(+) = 3'-dephospho-CoA + diphosphate. It functions in the pathway cofactor biosynthesis; coenzyme A biosynthesis; CoA from (R)-pantothenate: step 4/5. Its function is as follows. Reversibly transfers an adenylyl group from ATP to 4'-phosphopantetheine, yielding dephospho-CoA (dPCoA) and pyrophosphate. In Histophilus somni (strain 2336) (Haemophilus somnus), this protein is Phosphopantetheine adenylyltransferase.